Here is a 251-residue protein sequence, read N- to C-terminus: Flap endonuclease Xni (251 aa).

Mg(2+) is bound at residue aspartate 104. One can recognise a 5'-3' exonuclease domain in the interval 160-249 (VLPRQLPDYW…IDGNLQQLRL (90 aa)). Residues leucine 171, alanine 172, proline 180, valine 182, and isoleucine 185 each coordinate K(+). The interaction with DNA stretch occupies residues 184-189 (GIGPKS).

This sequence belongs to the Xni family. It depends on Mg(2+) as a cofactor. The cofactor is K(+).

Functionally, has flap endonuclease activity. During DNA replication, flap endonucleases cleave the 5'-overhanging flap structure that is generated by displacement synthesis when DNA polymerase encounters the 5'-end of a downstream Okazaki fragment. In Salmonella schwarzengrund (strain CVM19633), this protein is Flap endonuclease Xni.